A 112-amino-acid polypeptide reads, in one-letter code: Thioredoxin-like protein YdfQ (112 aa).

A Thioredoxin domain is found at 1-107 (MKEMTGLHSL…LEQKLKRVYR (107 aa)). A disulfide bridge connects residues Cys32 and Cys35.

The polypeptide is Thioredoxin-like protein YdfQ (ydfQ) (Bacillus subtilis (strain 168)).